Here is a 271-residue protein sequence, read N- to C-terminus: Tryptophan synthase alpha chain (271 aa).

Residues E49 and D60 each act as proton acceptor in the active site.

This sequence belongs to the TrpA family. In terms of assembly, tetramer of two alpha and two beta chains.

The enzyme catalyses (1S,2R)-1-C-(indol-3-yl)glycerol 3-phosphate + L-serine = D-glyceraldehyde 3-phosphate + L-tryptophan + H2O. The protein operates within amino-acid biosynthesis; L-tryptophan biosynthesis; L-tryptophan from chorismate: step 5/5. In terms of biological role, the alpha subunit is responsible for the aldol cleavage of indoleglycerol phosphate to indole and glyceraldehyde 3-phosphate. This Buchnera aphidicola subsp. Schizaphis graminum (strain Sg) protein is Tryptophan synthase alpha chain.